The chain runs to 444 residues: Transposase for insertion sequence element IS1557 (444 aa).

The disordered stretch occupies residues 273-292 (PKWGRGRPGKNAAPRPGRER).

It belongs to the transposase 12 family.

The chain is Transposase for insertion sequence element IS1557 from Mycobacterium tuberculosis (strain CDC 1551 / Oshkosh).